The chain runs to 174 residues: Acetolactate synthase small subunit (174 aa).

The 75-residue stretch at Thr4–Asn78 folds into the ACT domain.

It belongs to the acetolactate synthase small subunit family. In terms of assembly, dimer of large and small chains.

The protein resides in the plastid. The protein localises to the chloroplast. The catalysed reaction is 2 pyruvate + H(+) = (2S)-2-acetolactate + CO2. It functions in the pathway amino-acid biosynthesis; L-isoleucine biosynthesis; L-isoleucine from 2-oxobutanoate: step 1/4. Its pathway is amino-acid biosynthesis; L-valine biosynthesis; L-valine from pyruvate: step 1/4. The sequence is that of Acetolactate synthase small subunit (ilvH) from Pyropia yezoensis (Susabi-nori).